A 637-amino-acid polypeptide reads, in one-letter code: ATP-dependent rRNA helicase SPB4 (637 aa).

A Q motif motif is present at residues 10–38; it reads WENLRVDLEPWLKDAIRSLNYPTMTPVQA. Positions 41–236 constitute a Helicase ATP-binding domain; sequence IPLLSGNKDV…RTGMNNPVKL (196 aa). 54-61 contributes to the ATP binding site; that stretch reads AVTGSGKT. A DEAD box motif is present at residues 184-187; sequence DEAD. The region spanning 266 to 444 is the Helicase C-terminal domain; sequence KLTTMLQMLR…KFQKKLRKYM (179 aa). Residues 528-597 are a coiled coil; that stretch reads SAEKARLENL…QLEAEQERGG (70 aa). The interval 554–637 is disordered; the sequence is LKVKNEAWSS…GVLQGSFDDL (84 aa). Basic and acidic residues-rich tracts occupy residues 564–576 and 583–598; these read KTEK…ERKE and EAIE…RGGL. Gly residues predominate over residues 621 to 630; the sequence is NGGGGGGGVL.

It belongs to the DEAD box helicase family. DDX55/SPB4 subfamily. In terms of assembly, component of pre-60S ribosomal complexes.

The protein resides in the nucleus. The protein localises to the nucleolus. The enzyme catalyses ATP + H2O = ADP + phosphate + H(+). In terms of biological role, ATP-binding RNA helicase involved in the biogenesis of 60S ribosomal subunits. Binds 90S pre-ribosomal particles and dissociates from pre-60S ribosomal particles after processing of 27SB pre-rRNA. Required for the normal formation of 18S rRNA through the processing of pre-rRNAs at sites A0, A1 and A2, and the normal formation of 25S and 5.8S rRNAs through the processing of pre-rRNAs at sites C1 and C2. The polypeptide is ATP-dependent rRNA helicase SPB4 (Lodderomyces elongisporus (strain ATCC 11503 / CBS 2605 / JCM 1781 / NBRC 1676 / NRRL YB-4239) (Yeast)).